A 54-amino-acid polypeptide reads, in one-letter code: Large ribosomal subunit protein bL32 (54 aa).

The interval 1–54 (MAVQQNRKTRSRRGMRRSHDALTAAQLSVDSTSGETHRRHHVTADGYYRGKKVI) is disordered. The span at 7-16 (RKTRSRRGMR) shows a compositional bias: basic residues. Positions 25-34 (AQLSVDSTSG) are enriched in polar residues.

This sequence belongs to the bacterial ribosomal protein bL32 family.

This Tolumonas auensis (strain DSM 9187 / NBRC 110442 / TA 4) protein is Large ribosomal subunit protein bL32.